The chain runs to 154 residues: Myoglobin (154 aa).

Residues 2–148 (GLSDGEWQLV…FRNDMAAQYK (147 aa)) form the Globin domain. At Ser-4 the chain carries Phosphoserine. His-65 lines the nitrite pocket. His-65 serves as a coordination point for O2. At Thr-68 the chain carries Phosphothreonine. His-94 is a binding site for heme b.

As to quaternary structure, monomer.

It is found in the cytoplasm. The protein localises to the sarcoplasm. It carries out the reaction Fe(III)-heme b-[protein] + nitric oxide + H2O = Fe(II)-heme b-[protein] + nitrite + 2 H(+). It catalyses the reaction H2O2 + AH2 = A + 2 H2O. Functionally, monomeric heme protein which primary function is to store oxygen and facilitate its diffusion within muscle tissues. Reversibly binds oxygen through a pentacoordinated heme iron and enables its timely and efficient release as needed during periods of heightened demand. Depending on the oxidative conditions of tissues and cells, and in addition to its ability to bind oxygen, it also has a nitrite reductase activity whereby it regulates the production of bioactive nitric oxide. Under stress conditions, like hypoxia and anoxia, it also protects cells against reactive oxygen species thanks to its pseudoperoxidase activity. In Rangifer tarandus (Reindeer), this protein is Myoglobin.